We begin with the raw amino-acid sequence, 458 residues long: MTFRKSFDCYDFYDRAKVGEKCTQDDWDLMKIPMKAMELKQKYGLDFKGEFIPTDKDMMEKLFKAGFEMLLECGIYCTDTHRIVKYTEDEIWDAINNVQKEFVLGTGRDAVNVKKRSVGDKAKPIVQGGPTGSPISEDVFMPVHMSYALEKEVDTIVNGVMTSVRGKAPVPKSPYEVLAAKTETRLIKNACAMAGRPGMGVOGPETSLSAQGNISADCAGGMTCTDSHEVSQLNELKIDLDAISVIAHYKGNSDIIMDEQMPIFGGYAGGIEETTIVDVATHINAVIMSSASWHLDGPVHIRWGSTNTRETLTIAGWACATISEFTDILSGNQYYPCAGPCTEMCLLEASAQSITDTASGREILSGVASAKGVVTDKTTGMEARMMGEVARATAGVEISEVNVILDKLVALYEKNYASAPAGKTFQECYDVKTVTPTEEYMQVYDGARKKLEDLGLVF.

A non-standard amino acid (pyrrolysine) is located at residue Pyl-202.

This sequence belongs to the monomethylamine methyltransferase family.

It carries out the reaction Co(I)-[methylamine-specific corrinoid protein] + methylamine + H(+) = methyl-Co(III)-[methylamine-specific corrinoid protein] + NH4(+). It functions in the pathway one-carbon metabolism; methanogenesis from methylamine. Catalyzes the transfer of the methyl group from monomethylamine to the corrinoid cofactor of MtmC. The polypeptide is Monomethylamine methyltransferase MtmB1 (mtmB1) (Methanosarcina barkeri (strain Fusaro / DSM 804)).